A 621-amino-acid chain; its full sequence is Type 2 DNA topoisomerase 6 subunit B (621 aa).

ATP is bound by residues asparagine 48, aspartate 80, 101 to 102 (SR), 111 to 118 (GQQGIGIS), and lysine 435.

The protein belongs to the TOP6B family. In terms of assembly, homodimer. Heterotetramer of two Top6A and two Top6B chains.

It carries out the reaction ATP-dependent breakage, passage and rejoining of double-stranded DNA.. Functionally, relaxes both positive and negative superturns and exhibits a strong decatenase activity. This chain is Type 2 DNA topoisomerase 6 subunit B, found in Methanosarcina barkeri (strain Fusaro / DSM 804).